We begin with the raw amino-acid sequence, 324 residues long: o-succinylbenzoate synthase (324 aa).

Residue K135 is the Proton donor of the active site. Mg(2+)-binding residues include D163, E192, and D215. The active-site Proton acceptor is the K237.

Belongs to the mandelate racemase/muconate lactonizing enzyme family. MenC type 1 subfamily. Requires a divalent metal cation as cofactor.

It catalyses the reaction (1R,6R)-6-hydroxy-2-succinyl-cyclohexa-2,4-diene-1-carboxylate = 2-succinylbenzoate + H2O. It functions in the pathway quinol/quinone metabolism; 1,4-dihydroxy-2-naphthoate biosynthesis; 1,4-dihydroxy-2-naphthoate from chorismate: step 4/7. Its pathway is quinol/quinone metabolism; menaquinone biosynthesis. Converts 2-succinyl-6-hydroxy-2,4-cyclohexadiene-1-carboxylate (SHCHC) to 2-succinylbenzoate (OSB). This is o-succinylbenzoate synthase from Aliivibrio salmonicida (strain LFI1238) (Vibrio salmonicida (strain LFI1238)).